The sequence spans 165 residues: Peptide methionine sulfoxide reductase MsrA (165 aa).

Residue cysteine 11 is part of the active site.

It belongs to the MsrA Met sulfoxide reductase family.

The enzyme catalyses L-methionyl-[protein] + [thioredoxin]-disulfide + H2O = L-methionyl-(S)-S-oxide-[protein] + [thioredoxin]-dithiol. It carries out the reaction [thioredoxin]-disulfide + L-methionine + H2O = L-methionine (S)-S-oxide + [thioredoxin]-dithiol. In terms of biological role, has an important function as a repair enzyme for proteins that have been inactivated by oxidation. Catalyzes the reversible oxidation-reduction of methionine sulfoxide in proteins to methionine. This Ureaplasma urealyticum serovar 10 (strain ATCC 33699 / Western) protein is Peptide methionine sulfoxide reductase MsrA.